The following is a 317-amino-acid chain: tRNA pseudouridine synthase B (317 aa).

Aspartate 47 functions as the Nucleophile in the catalytic mechanism.

The protein belongs to the pseudouridine synthase TruB family. Type 1 subfamily.

It carries out the reaction uridine(55) in tRNA = pseudouridine(55) in tRNA. Its function is as follows. Responsible for synthesis of pseudouridine from uracil-55 in the psi GC loop of transfer RNAs. The chain is tRNA pseudouridine synthase B from Vibrio atlanticus (strain LGP32) (Vibrio splendidus (strain Mel32)).